Consider the following 308-residue polypeptide: Transcription factor zip-2 (308 aa).

Over residues 217-229 the composition is skewed to polar residues; the sequence is QSSSSSTVETTIT. Positions 217 to 277 are disordered; that stretch reads QSSSSSTVET…RESKEERERL (61 aa). The 64-residue stretch at 242–305 folds into the bZIP domain; it reads SSDYRHKRDK…EDYKRLVMMF (64 aa). The tract at residues 246-276 is basic motif; the sequence is RHKRDKNNLASQKSRQKRQAKIRESKEERER. Residues 266–277 are compositionally biased toward basic and acidic residues; sequence KIRESKEERERL. Positions 277-291 are leucine-zipper; that stretch reads LEKRKVQLQAMVLTL.

The protein belongs to the bZIP family. C/EBP subfamily. As to expression, expressed in the pharynx and throughout the intestine.

The protein localises to the nucleus. Its function is as follows. Transcription factor that binds to the promoter and the enhancer regions of target genes. May act together with the bZIP transcription factor, cebp-2. Involved in responding to mitochondrial damage. Plays a role in the delay of age-associated mitochondrial fragmentation and muscle decline. Has a protective role in response to infection by the Gram-negative bacterium P.aeruginosa. Required to prevent P.aeruginosa ToxA-mediated lethality. Required for the activation of several infection response genes including irg-1 and irg-2 following P.aeruginosa infection; target gene activation may involve effects of the bacterial toxin, ToxA, and perhaps other toxins. The chain is Transcription factor zip-2 from Caenorhabditis elegans.